The following is a 318-amino-acid chain: tRNA U34 carboxymethyltransferase (318 aa).

Residues K85, W99, K104, G124, 175–176, M190, Y194, and R311 each bind carboxy-S-adenosyl-L-methionine; that span reads LD.

The protein belongs to the class I-like SAM-binding methyltransferase superfamily. CmoB family. In terms of assembly, homotetramer.

The catalysed reaction is carboxy-S-adenosyl-L-methionine + 5-hydroxyuridine(34) in tRNA = 5-carboxymethoxyuridine(34) in tRNA + S-adenosyl-L-homocysteine + H(+). In terms of biological role, catalyzes carboxymethyl transfer from carboxy-S-adenosyl-L-methionine (Cx-SAM) to 5-hydroxyuridine (ho5U) to form 5-carboxymethoxyuridine (cmo5U) at position 34 in tRNAs. This is tRNA U34 carboxymethyltransferase from Ruthia magnifica subsp. Calyptogena magnifica.